The following is a 209-amino-acid chain: Small ribosomal subunit protein uS4 (209 aa).

One can recognise an S4 RNA-binding domain in the interval 98-164; the sequence is RRLDNVVYRL…LPVKNAIELN (67 aa).

This sequence belongs to the universal ribosomal protein uS4 family. As to quaternary structure, part of the 30S ribosomal subunit. Contacts protein S5. The interaction surface between S4 and S5 is involved in control of translational fidelity.

One of the primary rRNA binding proteins, it binds directly to 16S rRNA where it nucleates assembly of the body of the 30S subunit. Functionally, with S5 and S12 plays an important role in translational accuracy. This chain is Small ribosomal subunit protein uS4, found in Thermosipho africanus (strain TCF52B).